Reading from the N-terminus, the 614-residue chain is Probable Xaa-Pro aminopeptidase P (614 aa).

Positions 411, 422, 520, and 534 each coordinate Mn(2+).

Belongs to the peptidase M24B family. It depends on Mn(2+) as a cofactor.

The enzyme catalyses Release of any N-terminal amino acid, including proline, that is linked to proline, even from a dipeptide or tripeptide.. Catalyzes the removal of a penultimate prolyl residue from the N-termini of peptides. The protein is Probable Xaa-Pro aminopeptidase P (AMPP) of Sordaria macrospora (strain ATCC MYA-333 / DSM 997 / K(L3346) / K-hell).